Consider the following 562-residue polypeptide: NAD-dependent malic enzyme (562 aa).

Tyr-101 functions as the Proton donor in the catalytic mechanism. Residue Arg-154 coordinates NAD(+). Lys-172 acts as the Proton acceptor in catalysis. 3 residues coordinate a divalent metal cation: Glu-243, Asp-244, and Asp-267. 2 residues coordinate NAD(+): Asp-267 and Asn-415.

It belongs to the malic enzymes family. As to quaternary structure, homotetramer. Mg(2+) serves as cofactor. The cofactor is Mn(2+).

The catalysed reaction is (S)-malate + NAD(+) = pyruvate + CO2 + NADH. It carries out the reaction oxaloacetate + H(+) = pyruvate + CO2. The sequence is that of NAD-dependent malic enzyme from Colwellia psychrerythraea (strain 34H / ATCC BAA-681) (Vibrio psychroerythus).